The chain runs to 383 residues: tRNA-specific 2-thiouridylase MnmA (383 aa).

ATP contacts are provided by residues 31–38 (GLSGGVDS) and leucine 57. Residue cysteine 118 is the Nucleophile of the active site. Cysteine 118 and cysteine 217 are joined by a disulfide. Glycine 143 serves as a coordination point for ATP. The segment at 167-169 (KDQ) is interaction with tRNA. The active-site Cysteine persulfide intermediate is the cysteine 217. The interval 322 to 323 (RY) is interaction with tRNA.

The protein belongs to the MnmA/TRMU family.

It is found in the cytoplasm. It carries out the reaction S-sulfanyl-L-cysteinyl-[protein] + uridine(34) in tRNA + AH2 + ATP = 2-thiouridine(34) in tRNA + L-cysteinyl-[protein] + A + AMP + diphosphate + H(+). Catalyzes the 2-thiolation of uridine at the wobble position (U34) of tRNA, leading to the formation of s(2)U34. The chain is tRNA-specific 2-thiouridylase MnmA from Synechococcus sp. (strain RCC307).